Reading from the N-terminus, the 126-residue chain is Nitrogenase-stabilizing/protective protein NifW (126 aa).

A disordered region spans residues 104 to 126 (VPMSEITVERPATTQTDEKGQQR).

It belongs to the NifW family. Homotrimer; associates with NifD.

May protect the nitrogenase Fe-Mo protein from oxidative damage. The polypeptide is Nitrogenase-stabilizing/protective protein NifW (Parafrankia sp. (strain EAN1pec)).